The sequence spans 1659 residues: Fatty acid synthase subunit alpha (1659 aa).

The tract at residues 114–139 (TQAQASGGAGTIAGAGSSTAPVTAPP) is disordered. A Carrier domain is found at 160–235 (AQAFEIVRTL…AALQKTFTGQ (76 aa)). O-(pantetheine 4'-phosphoryl)serine is present on S195. Residues 588–826 (GRSVLITGAG…LCLMFNTMCS (239 aa)) are ketoreductase (KR) domain. The 546-residue stretch at 1030 to 1575 (KQLLHEVLIQ…QKGAQTIVVH (546 aa)) folds into the Ketosynthase family 3 (KS3) domain. Catalysis depends on for beta-ketoacyl synthase activity residues C1217, H1458, and H1499. The interval 1631-1659 (ETLLDPTPPQTNVDDRVARSIVQQESAEP) is disordered.

The protein belongs to the thiolase-like superfamily. Fungal fatty acid synthetase subunit alpha family. [Alpha(6)beta(6)] hexamers of two multifunctional subunits (alpha and beta). In terms of processing, 4'-phosphopantetheine is transferred from CoA to a specific serine of the acyl carrier domain by the C-terminal PPT domain. This modification is essential for activity because fatty acids are bound in thioester linkage to the sulfhydryl of the prosthetic group.

It catalyses the reaction acetyl-CoA + n malonyl-CoA + 2n NADPH + 4n H(+) = a long-chain-acyl-CoA + n CoA + n CO2 + 2n NADP(+).. The catalysed reaction is a fatty acyl-[ACP] + malonyl-[ACP] + H(+) = a 3-oxoacyl-[ACP] + holo-[ACP] + CO2. It carries out the reaction a (3R)-hydroxyacyl-[ACP] + NADP(+) = a 3-oxoacyl-[ACP] + NADPH + H(+). It participates in secondary metabolite biosynthesis. Functionally, fatty acid synthase subunit alpha; part of the gene cluster that mediates the biosynthesis of aspercryptins, linear lipopeptides built from six amino acids including 2 highly unusual and nonproteogenic amino acids, 2-amino-octanoic acid (2aoa) and 2-amino-dodecanol (2adol). The core structure of aspercryptins is as follows: Ser/Ala-Thr-Ile/Val-2aoa-Asn-2adol. The first step of aspercryptin biosynthesis is the generation of the fatty acid precursors, octanoic and dodecanoic acids, by the FAS subunits atnF and atnM. The fatty acid precursors are likely transformed into the corresponding alpha-amino fatty acids in three steps. First, they are hydroxylated by the cytochrome P450 monooxygenase atnE, then oxidized to the corresponding alpha-keto acids by the NAD(P)-dependent oxidoreductase atnD, and finally converted to the alpha-amino fatty acids by the PLP-dependent aminotransferases atnH or atnJ. the alpha-amino fatty acids, 2-amino-octanoic and 2-amino-dodecanoic acids, are recognized, activated, and covalently tethered to the NRPS atnA by its fourth and sixth adenylation domains. The second module of atnA is the Thr module and contains an epimerase (E) domain responsible for the epimerization of Thr to D-allo-Thr. Additionally, despite atnA having only one epimerase domain, the first amino acid of aspercryptin A1 is D-Ser, suggesting that serine is either loaded directly as D-Ser on the first module or that the epimerase domain in the threonine module epimerizes both L-Ser and L-Thr. After condensation of the hexapeptide of aspercryptin, the C-terminal reductase (TE) domain might be involved in the reductive release and production of the aldehyde hexapeptide. Further reduction would generate aspercryptins. The variety of aspercryptins produced reflects the flexibility of the atnA NRPS, allowing incorporation of alanine instead of serine, valine for isoleucine, and a C10 fatty amino alcohol instead of the C12 version. AtnB seems to be involved in the selectivity for Ile versus Val by the third module. Moreover, type B, C and D aspercryptins have an additional N-terminal cichorine, acetyl and propionyl group respectively. The polypeptide is Fatty acid synthase subunit alpha (Emericella nidulans (strain FGSC A4 / ATCC 38163 / CBS 112.46 / NRRL 194 / M139) (Aspergillus nidulans)).